The following is a 226-amino-acid chain: 6-deoxy-6-sulfo-D-fructose transaldolase (226 aa).

Lysine 89 (schiff-base intermediate with substrate) is an active-site residue.

This sequence belongs to the transaldolase family.

It carries out the reaction 6-deoxy-6-sulfo-D-fructose + D-glyceraldehyde 3-phosphate = D-fructose 6-phosphate + (2S)-3-sulfolactaldehyde. The enzyme catalyses 6-deoxy-6-sulfo-D-fructose + D-erythrose 4-phosphate = (2S)-3-sulfolactaldehyde + D-sedoheptulose 7-phosphate. Its function is as follows. Part of the sulfo-TAL (or sulfo-SFT) pathway, a D-sulfoquinovose degradation pathway that produces sulfolactate (SL). Catalyzes the conversion of 6-deoxy-6-sulfo-D-fructose (SF) and glyceraldehyde 3-phosphate (GAP) into fructose-6-phosphate (F6P) and 3-sulfolactaldehyde (SLA). Can also catalyze the SF-cleavage with erythrose 4-phosphate (E4P) as acceptor, forming 3-sulfolactaldehyde (SLA) and sedoheptulose 7-phosphate (S7P). This is 6-deoxy-6-sulfo-D-fructose transaldolase from Priestia aryabhattai (Bacillus aryabhattai).